We begin with the raw amino-acid sequence, 190 residues long: Calcium-binding protein NCS-1 (190 aa).

The N-myristoyl glycine moiety is linked to residue Gly2. EF-hand domains lie at 40–58, 60–95, 96–131, and 144–179; these read SGHLNKSEFQKIYKQFFPF, DPSAFAEYVFNVFDADKNGYIDFKEFICALSVTSRG, ELNDKLIWAFQLYDLDNNGLISYDEMLRIVDAIYKM, and TPEKRVNKIFNMMDKNKDGQLTLEEFCEGSKRDPTI. Ca(2+)-binding residues include Asp73, Asp75, Asn77, Tyr79, Glu84, Asp109, Asp111, Asn113, Glu120, Asp157, Asn159, Asp161, Gln163, and Glu168.

This sequence belongs to the recoverin family.

Its subcellular location is the membrane. In terms of biological role, negatively regulates sporulation perhaps by controlling Ca(2+)-dependent desensitization of git3. The polypeptide is Calcium-binding protein NCS-1 (ncs1) (Schizosaccharomyces pombe (strain 972 / ATCC 24843) (Fission yeast)).